Consider the following 284-residue polypeptide: GPN-loop GTPase 3 (284 aa).

GTP is bound at residue 13–18 (GSGKST). The short motif at 72–74 (GPN) is the Gly-Pro-Asn (GPN)-loop; involved in dimer interface element. 174 to 177 (TKMD) contacts GTP. The disordered stretch occupies residues 261 to 284 (KEPKEHEDESSSMFDEYFQEHQNE).

This sequence belongs to the GPN-loop GTPase family. Heterodimer with GPN1. Binds to RNA polymerase II (RNAPII). Interacts directly with subunits RPB4 and RPB7 and the CTD of RPB1.

Small GTPase required for proper localization of RNA polymerase II (RNAPII). May act at an RNAP assembly step prior to nuclear import. This is GPN-loop GTPase 3 from Bos taurus (Bovine).